A 410-amino-acid polypeptide reads, in one-letter code: Enterobactin exporter EntS (410 aa).

Over 1–21 (MNKQSWLLNLSLLKTHPAFRA) the chain is Cytoplasmic. Residues 22–42 (VFLARFISIVSLGLLGVAVPV) form a helical membrane-spanning segment. At 43-55 (QIQMMTHSTWQVG) the chain is on the periplasmic side. Residues 56–76 (LSVTLTGGAMFVGLMVGGVLA) traverse the membrane as a helical segment. Topologically, residues 77–83 (DRYERKK) are cytoplasmic. The chain crosses the membrane as a helical span at residues 84–104 (VILLARGTCGIGFIGLCLNAL). Residues 105 to 109 (LPEPS) are Periplasmic-facing. A helical membrane pass occupies residues 110 to 130 (LLAIYLLGLWDGFFASLGVTA). Residues 131 to 156 (LLAATSALVGRENLMQAGAITMLTVR) lie on the Cytoplasmic side of the membrane. A helical transmembrane segment spans residues 157-177 (LGSVISPMIGGLLLATGGVAW). Residue N178 is a topological domain, periplasmic. Residues 179–199 (YGLAAAGTFITLLPLLSLPEL) traverse the membrane as a helical segment. At 200–218 (PPPPQPLEHPLKSLLAGFR) the chain is on the cytoplasmic side. Residues 219 to 233 (FLLASPLLGGLLTMA) traverse the membrane as a helical segment. At 234 to 250 (SAVLVLYPALADNWQMS) the chain is on the periplasmic side. Residues 251–271 (AAQIGFLYAAIPLGAAIGALT) traverse the membrane as a helical segment. At 272 to 281 (SGKLAHSARP) the chain is on the cytoplasmic side. Residues 282 to 301 (GLLMLLSTLGSFLAIGLFGL) traverse the membrane as a helical segment. The Periplasmic segment spans residues 302–307 (MPMWIL). The helical transmembrane segment at 308 to 330 (GVVCLALFGWLSAVSSLLQYTML) threads the bilayer. The Cytoplasmic portion of the chain corresponds to 331–350 (QTQTPEAMLGRINGLWTAQN). The chain crosses the membrane as a helical span at residues 351–371 (VTGDAIGAALLGGLGAMMTPV). A372 is a topological domain (periplasmic). Residues 373–393 (SASASGFGLLIIGVLLLLVLV) form a helical membrane-spanning segment. At 394–410 (ELRRFRQTPPQVTASDS) the chain is on the cytoplasmic side.

It belongs to the major facilitator superfamily. EntS (TC 2.A.1.38) family.

Its subcellular location is the cell inner membrane. Its function is as follows. Component of an export pathway for enterobactin. This chain is Enterobactin exporter EntS, found in Shigella flexneri.